We begin with the raw amino-acid sequence, 530 residues long: NMDA receptor synaptonuclear signaling and neuronal migration factor (530 aa).

Gly2 carries N-myristoyl glycine lipidation. The interval 2-233 is necessary and sufficient to elicit dendritic processes and synaptic contacts; the sequence is GAAASRRRAL…FSFQTATTTM (232 aa). Disordered regions lie at residues 34–67 and 125–197; these read SQSHPENRNGADHLLADAYSGHDGSPEMQPAPQN and KGRR…GRRK. Positions 38–48 are enriched in basic and acidic residues; it reads PENRNGADHLL. Residues 125–137 show a composition bias toward basic residues; sequence KGRRQRHPHHHSQ. Positions 153–162 are enriched in polar residues; it reads PCQSWAGSRQ. Residue Ser204 is modified to Phosphoserine. Positions 247 to 250 match the Nuclear localization signal motif; that stretch reads RRKR. The tract at residues 285 to 312 is disordered; sequence RSFSRSWSDPTPMKADTSHDSRDSSDLQ. Phosphoserine occurs at positions 290 and 292. A compositionally biased stretch (basic and acidic residues) spans 300 to 309; it reads DTSHDSRDSS.

It belongs to the NSMF family. In terms of assembly, interacts with KPNA1; the interaction occurs in a calcium-independent manner after synaptic NMDA receptor stimulation and is required for nuclear import of NSMF but is competed by CABP1. Interacts (via the central NLS-containing motif region) with CABP1 (via EF-hands 1 and 2); the interaction occurs in a calcium-dependent manner after synaptic NMDA receptor stimulation and prevents the nuclear import of NSMF. Cannot be competed by calmodulin. In terms of processing, proteolytically processed after NMDA receptor activation. Cleaved in a calcium-dependent and calpain-sensitive manner. Calpain cleavage is essential for the translocation process from dendrites to the nucleus. Highly expressed in adult and fetal brain. Weakly expressed in heart, liver, spleen, testis, small intestine, skeletal muscle, peripheral white blood cells and kidney.

It is found in the nucleus. The protein resides in the nucleus envelope. It localises to the nucleus membrane. The protein localises to the nucleus matrix. Its subcellular location is the cytoplasm. It is found in the cell cortex. The protein resides in the cytoskeleton. It localises to the cell membrane. The protein localises to the cell projection. Its subcellular location is the dendrite. It is found in the synapse. The protein resides in the synaptosome. It localises to the postsynaptic density. The protein localises to the membrane. Its function is as follows. Couples NMDA-sensitive glutamate receptor signaling to the nucleus and triggers long-lasting changes in the cytoarchitecture of dendrites and spine synapse processes. Part of the cAMP response element-binding protein (CREB) shut-off signaling pathway. Stimulates outgrowth of olfactory axons and migration of gonadotropin-releasing hormone (GnRH) and luteinizing-hormone-releasing hormone (LHRH) neuronal cells. The polypeptide is NMDA receptor synaptonuclear signaling and neuronal migration factor (NSMF) (Homo sapiens (Human)).